Consider the following 195-residue polypeptide: Phenoloxidase subunit 1 (195 aa).

A Cu cation-binding site is contributed by His10. N-linked (GlcNAc...) asparagine glycosylation is found at Asn77, Asn97, and Asn98.

The protein belongs to the tyrosinase family. Heterodimer. Cu(2+) serves as cofactor.

The protein resides in the secreted. The catalysed reaction is 2 L-dopa + O2 = 2 L-dopaquinone + 2 H2O. It catalyses the reaction L-tyrosine + O2 = L-dopaquinone + H2O. In terms of biological role, this is a copper-containing oxidase that functions in the formation of pigments such as melanins and other polyphenolic compounds. Catalyzes the rate-limiting conversions of tyrosine to DOPA, DOPA to DOPA-quinone and possibly 5,6 dihydroxyindole to indole-5'6 quinone. This chain is Phenoloxidase subunit 1, found in Simulium damnosum (Black fly).